Reading from the N-terminus, the 700-residue chain is Polyribonucleotide nucleotidyltransferase (700 aa).

Positions 484 and 490 each coordinate Mg(2+). Residues 551–610 (PRVIRMVVDPEKIREIIGPGGKTISKIIAETGVKIDIEEDGRLYITASDLRSGERAKQMI) form the KH domain. The S1 motif domain maps to 620-688 (GEIYLGKVLR…KLGRISLSRK (69 aa)).

This sequence belongs to the polyribonucleotide nucleotidyltransferase family. Mg(2+) is required as a cofactor.

It localises to the cytoplasm. The catalysed reaction is RNA(n+1) + phosphate = RNA(n) + a ribonucleoside 5'-diphosphate. Functionally, involved in mRNA degradation. Catalyzes the phosphorolysis of single-stranded polyribonucleotides processively in the 3'- to 5'-direction. The polypeptide is Polyribonucleotide nucleotidyltransferase (Thermoanaerobacter pseudethanolicus (strain ATCC 33223 / 39E) (Clostridium thermohydrosulfuricum)).